Here is a 244-residue protein sequence, read N- to C-terminus: Methanethiol S-methyltransferase (244 aa).

Helical transmembrane passes span 7–27 (IIYG…AIGF), 41–61 (IAAP…VFAV), 90–110 (LLAS…PAVI), 120–140 (VALW…TFMI), and 181–201 (GFVV…LFAI).

This sequence belongs to the nurim family.

The protein resides in the membrane. The catalysed reaction is methanethiol + S-adenosyl-L-methionine = dimethyl sulfide + S-adenosyl-L-homocysteine + H(+). Functionally, catalyzes the methylation of methanethiol (MeSH) to yield dimethylsulphide (DMS). The polypeptide is Methanethiol S-methyltransferase (Mycobacterium tuberculosis (strain ATCC 25618 / H37Rv)).